The chain runs to 115 residues: NADH-ubiquinone oxidoreductase chain 3 (115 aa).

A run of 3 helical transmembrane segments spans residues 3–23 (VMLT…IAFW), 55–75 (FFLV…LLPL), and 84–104 (LTTM…SLAY).

It belongs to the complex I subunit 3 family. In terms of assembly, core subunit of respiratory chain NADH dehydrogenase (Complex I) which is composed of 45 different subunits. Interacts with TMEM186. Interacts with TMEM242.

The protein localises to the mitochondrion inner membrane. The enzyme catalyses a ubiquinone + NADH + 5 H(+)(in) = a ubiquinol + NAD(+) + 4 H(+)(out). Functionally, core subunit of the mitochondrial membrane respiratory chain NADH dehydrogenase (Complex I) which catalyzes electron transfer from NADH through the respiratory chain, using ubiquinone as an electron acceptor. Essential for the catalytic activity of complex I. The chain is NADH-ubiquinone oxidoreductase chain 3 from Canis lupus familiaris (Dog).